The sequence spans 180 residues: Stathmin-3 (180 aa).

Residues cysteine 22 and cysteine 24 are each lipidated (S-palmitoyl cysteine). The SLD domain occupies 38 to 180; that stretch reads GDMEVKQLDK…NKEQREEMSG (143 aa). Residues serine 50, serine 60, serine 65, serine 68, serine 72, serine 73, and serine 81 each carry the phosphoserine modification. Over residues 60–74 the composition is skewed to low complexity; that stretch reads SPSDLSPESPVLSSP. Residues 60–81 are disordered; the sequence is SPSDLSPESPVLSSPPKRKDAS. A coiled-coil region spans residues 75–179; sequence PKRKDASLEE…RNKEQREEMS (105 aa).

Belongs to the stathmin family. In terms of assembly, interacts with STAT3. Interacts with CLU (secreted form); this interaction may act as an important modulator during neuronal differentiation. N-terminal palmitoylation promotes specific anchoring to the cytosolic leaflet of Golgi membranes and subsequent vesicular trafficking along dendrites and axons. Neuronal Stathmins are substrates for palmitoyltransferases ZDHHC3, ZDHHC7 and ZDHHC15. Neuron specific.

The protein localises to the golgi apparatus. It is found in the cell projection. The protein resides in the growth cone. Its subcellular location is the axon. It localises to the cytoplasm. The protein localises to the cytosol. Exhibits microtubule-destabilizing activity, which is antagonized by STAT3. This Mus musculus (Mouse) protein is Stathmin-3 (Stmn3).